A 144-amino-acid polypeptide reads, in one-letter code: UPF0735 ACT domain-containing protein LCABL_12100 (144 aa).

An ACT domain is found at 68-143 (VISLMLHHDR…GVSDVHLVSV (76 aa)).

It belongs to the UPF0735 family.

This Lacticaseibacillus casei (strain BL23) (Lactobacillus casei) protein is UPF0735 ACT domain-containing protein LCABL_12100.